A 321-amino-acid chain; its full sequence is Inner membrane protein YtfF (321 aa).

The Cytoplasmic portion of the chain corresponds to 1–4 (MISG). Residues 5–25 (VLYALLAGLMWGLIFVGPLIV) traverse the membrane as a helical segment. In terms of domain architecture, EamA spans 13–141 (LMWGLIFVGP…IGIGLACVNI (129 aa)). The Periplasmic portion of the chain corresponds to 26 to 30 (PEYPA). A helical transmembrane segment spans residues 31–51 (MLQSMGRYLALGLIALPIAWL). Residues 52-65 (GRVRLRQLARRDWL) are Cytoplasmic-facing. The helical transmembrane segment at 66–86 (TALMLTMMGNLIYYFCLASAI) threads the bilayer. The Periplasmic portion of the chain corresponds to 87–92 (QRTGAP). A helical membrane pass occupies residues 93–113 (VSTMIIGTLPVVIPVFANLLY). Residues 114 to 120 (SQRDGKL) are Cytoplasmic-facing. The chain crosses the membrane as a helical span at residues 121–141 (AWGKLAPALICIGIGLACVNI). Topologically, residues 142–154 (AELNHGLPDFDWA) are periplasmic. Residues 155-175 (RYTSGIVLALVSVVCWAWYAL) traverse the membrane as a helical segment. The Cytoplasmic segment spans residues 176–194 (RNARWLRENPDKHPMMWAT). The chain crosses the membrane as a helical span at residues 195-215 (AQALVTLPVSLIGYLVACYWL). Topologically, residues 216-230 (NTQTPDFSLPFGPRP) are periplasmic. The helical transmembrane segment at 231 to 251 (LVFISLMVAIAVLCSWVGALC) threads the bilayer. The Cytoplasmic segment spans residues 252–261 (WNVASQLLPT). A helical membrane pass occupies residues 262 to 282 (VILGPLIVFETLAGLLYTFLL). The Periplasmic portion of the chain corresponds to 283–285 (RQQ). The helical transmembrane segment at 286-306 (MPPLMTLSGIALLVIGVVIAV) threads the bilayer. Residues 307-321 (RAKPEKPLTESVSES) are Cytoplasmic-facing.

Its subcellular location is the cell inner membrane. The chain is Inner membrane protein YtfF (ytfF) from Escherichia coli (strain K12).